The chain runs to 102 residues: Carboxysome shell protein CcmK3 (102 aa).

In terms of domain architecture, BMC spans 4–90 (AVGVIQTDGF…PPDNVETVMP (87 aa)).

It belongs to the bacterial microcompartments protein family. CcmK subfamily. As to quaternary structure, interacts stably with CcmK4, forming heterohexamers that can make dodecamers. Heterohexamers have a 1:2 CcmK3:CcmK4 stoichiometry. Upon expression in E.coli forms oligomers that could be dimers or trimers, but never hexamers; bulky residues in the pore region probably preclude the formation of homohexamers.

The protein localises to the carboxysome. A probably non-essential, minor shell protein of the carboxysome, a polyhedral inclusion where RuBisCO (ribulose bisphosphate carboxylase, rbcL-rbcS) is sequestered. Hexamers form sheets that form the facets of the polyhedral carboxysome. In PCC 7418 there are several CcmK paralogs with presumably functional differences. This subunit probably only makes heterohexamers with CcmK4. Heterohexamers can also make dodecamers, formation depends on buffer conditions. The chain is Carboxysome shell protein CcmK3 from Halothece sp. (strain PCC 7418) (Synechococcus sp. (strain PCC 7418)).